The following is a 130-amino-acid chain: Small ribosomal subunit protein uS11 (130 aa).

This sequence belongs to the universal ribosomal protein uS11 family. As to quaternary structure, part of the 30S ribosomal subunit. Interacts with proteins S7 and S18. Binds to IF-3.

Located on the platform of the 30S subunit, it bridges several disparate RNA helices of the 16S rRNA. Forms part of the Shine-Dalgarno cleft in the 70S ribosome. The polypeptide is Small ribosomal subunit protein uS11 (Microcystis aeruginosa (strain NIES-843 / IAM M-2473)).